The chain runs to 257 residues: Protein LigF (257 aa).

In terms of domain architecture, GST N-terminal spans 1-82 (MTLKLYSFGP…YLEDVFPESG (82 aa)). Residues 89–257 (DPFKRAEMRV…LLKRQNEKVA (169 aa)) form the GST C-terminal domain.

Belongs to the GST superfamily.

In terms of biological role, lignin degradation enzyme. In Sphingobium sp. (strain NBRC 103272 / SYK-6), this protein is Protein LigF (ligF).